The sequence spans 371 residues: MYNESPIIRRKSSRIYVGNVPIGDGAPIAVQSMTNTRTTDVEATVAQIKALENVGADIVRVSVPTMDAAEAFKLIKQQTSIPLIADIHFDYRIALKVAEYGVDCLRINPGNIGNEERIRSVVECARDMNIPIRIGVNGGSLEKDLMDKYKEPTPEALLESAMRHVDILDRLNFDQFKVSVKASDVFLAVESYRLLAKQIVQPLHLGITEAGGARAGSVKSAVGLGMLLADGIGDTLRISLAADPVEEIKVGFDILKSLRIRSRGINFIACPSCSRQEFDVISTVNELEQRLEDIVTPMDVSIIGCVVNGPGEALVSDIGLTGGNRMSGYYDDGVRQKERFDNTNIVDSLEAKIRAKAAIVAGRIPAQDLNK.

[4Fe-4S] cluster-binding residues include C270, C273, C305, and E312.

This sequence belongs to the IspG family. Requires [4Fe-4S] cluster as cofactor.

The catalysed reaction is (2E)-4-hydroxy-3-methylbut-2-enyl diphosphate + oxidized [flavodoxin] + H2O + 2 H(+) = 2-C-methyl-D-erythritol 2,4-cyclic diphosphate + reduced [flavodoxin]. It functions in the pathway isoprenoid biosynthesis; isopentenyl diphosphate biosynthesis via DXP pathway; isopentenyl diphosphate from 1-deoxy-D-xylulose 5-phosphate: step 5/6. Converts 2C-methyl-D-erythritol 2,4-cyclodiphosphate (ME-2,4cPP) into 1-hydroxy-2-methyl-2-(E)-butenyl 4-diphosphate. The chain is 4-hydroxy-3-methylbut-2-en-1-yl diphosphate synthase (flavodoxin) from Shewanella pealeana (strain ATCC 700345 / ANG-SQ1).